Consider the following 120-residue polypeptide: Superoxide dismutase [Cu-Zn] (120 aa).

Cu cation-binding residues include histidine 11, histidine 13, and histidine 28. A disordered region spans residues glycine 16–isoleucine 52. Cysteine 22 and cysteine 112 are disulfide-bonded. Zn(2+) is bound by residues histidine 28, histidine 36, histidine 45, and aspartate 48. The segment covering glycine 33–glycine 47 has biased composition (basic and acidic residues). Histidine 85 serves as a coordination point for Cu cation.

It belongs to the Cu-Zn superoxide dismutase family. Homodimer. It depends on Cu cation as a cofactor. Zn(2+) is required as a cofactor.

The protein localises to the cytoplasm. It catalyses the reaction 2 superoxide + 2 H(+) = H2O2 + O2. In terms of biological role, destroys radicals which are normally produced within the cells and which are toxic to biological systems. This Aspergillus japonicus protein is Superoxide dismutase [Cu-Zn] (sodC).